Consider the following 763-residue polypeptide: Phosphoglycerol transferase I (763 aa).

Transmembrane regions (helical) follow at residues 1–21 (MSELLSVALFLASVLIYAWKA), 26–46 (WWFAATLTVLGLFVILNITLY), 77–97 (ILPGIGIALALVAVFGALGWI), and 108–128 (VGYSLLALLLALGSVDASPAF).

Belongs to the OpgB family.

It is found in the cell inner membrane. It catalyses the reaction a phosphatidylglycerol + a membrane-derived-oligosaccharide D-glucose = a 1,2-diacyl-sn-glycerol + a membrane-derived-oligosaccharide 6-(glycerophospho)-D-glucose.. Its pathway is glycan metabolism; osmoregulated periplasmic glucan (OPG) biosynthesis. Transfers a phosphoglycerol residue from phosphatidylglycerol to the membrane-bound nascent glucan backbones. The chain is Phosphoglycerol transferase I from Salmonella agona (strain SL483).